Consider the following 121-residue polypeptide: Small ribosomal subunit protein uS13 (121 aa).

Residues 94–121 are disordered; the sequence is GLPLRGQRTRTNARTRKGPRKAGVALKK.

This sequence belongs to the universal ribosomal protein uS13 family. As to quaternary structure, part of the 30S ribosomal subunit. Forms a loose heterodimer with protein S19. Forms two bridges to the 50S subunit in the 70S ribosome.

In terms of biological role, located at the top of the head of the 30S subunit, it contacts several helices of the 16S rRNA. In the 70S ribosome it contacts the 23S rRNA (bridge B1a) and protein L5 of the 50S subunit (bridge B1b), connecting the 2 subunits; these bridges are implicated in subunit movement. Contacts the tRNAs in the A and P-sites. The protein is Small ribosomal subunit protein uS13 of Ralstonia nicotianae (strain ATCC BAA-1114 / GMI1000) (Ralstonia solanacearum).